The sequence spans 112 residues: Integration host factor subunit alpha (112 aa).

This sequence belongs to the bacterial histone-like protein family. As to quaternary structure, heterodimer of an alpha and a beta chain.

Functionally, this protein is one of the two subunits of integration host factor, a specific DNA-binding protein that functions in genetic recombination as well as in transcriptional and translational control. The sequence is that of Integration host factor subunit alpha from Rhizobium leguminosarum bv. trifolii (strain WSM2304).